Consider the following 913-residue polypeptide: Eukaryotic translation initiation factor 3 subunit C (913 aa).

The tract at residues 1-44 (MSRFFTTGSDSESESSLSGEELVTKPVGGNYGKQPLLLSEDEED) is disordered. Residues 8 to 21 (GSDSESESSLSGEE) are compositionally biased toward low complexity. Residues S9, S11, S13, S15, S16, S18, and S39 each carry the phosphoserine modification. At K99 the chain carries N6-acetyllysine. Disordered stretches follow at residues 157–301 (TSYK…GGEW) and 522–542 (QLTPPEGSSKSEQDQAENEGE). Residues S166, S178, S181, and S182 each carry the phosphoserine modification. Residues 166 to 190 (SADEDAEKNEEDSEGSSDEDEDEDG) show a composition bias toward acidic residues. Residues 199 to 216 (KKSEAPSGESRKFLKKMD) are compositionally biased toward basic and acidic residues. Acidic residues predominate over residues 217-232 (DEDEDSEDSEDDEDWD). Residues 261–278 (PTTDEDKKAAEKKREDKA) show a composition bias toward basic and acidic residues. A compositionally biased stretch (polar residues) spans 522 to 531 (QLTPPEGSSK). The residue at position 524 (T524) is a Phosphothreonine. K643 carries the N6-acetyllysine modification. Positions 673 to 849 (FHLHINLELL…QTVVMHRTEP (177 aa)) constitute a PCI domain. The segment at 885–913 (FRDQKDGYRKNEGYMRRGGYRQQQSQTAY) is disordered. Residues 886 to 899 (RDQKDGYRKNEGYM) are compositionally biased toward basic and acidic residues. The residue at position 909 (S909) is a Phosphoserine.

This sequence belongs to the eIF-3 subunit C family. As to quaternary structure, component of the eukaryotic translation initiation factor 3 (eIF-3) complex, which is composed of 13 subunits: EIF3A, EIF3B, EIF3C, EIF3D, EIF3E, EIF3F, EIF3G, EIF3H, EIF3I, EIF3J, EIF3K, EIF3L and EIF3M. The eIF-3 complex appears to include 3 stable modules: module A is composed of EIF3A, EIF3B, EIF3G and EIF3I; module B is composed of EIF3F, EIF3H, and EIF3M; and module C is composed of EIF3C, EIF3D, EIF3E, EIF3K and EIF3L. EIF3C of module C binds EIF3B of module A and EIF3H of module B, thereby linking the three modules. EIF3J is a labile subunit that binds to the eIF-3 complex via EIF3B. The eIF-3 complex interacts with RPS6KB1 under conditions of nutrient depletion. Mitogenic stimulation leads to binding and activation of a complex composed of MTOR and RPTOR, leading to phosphorylation and release of RPS6KB1 and binding of EIF4B to eIF-3. Interacts with ALKBH4, IFIT1 and IFIT2. Interacts with BZW2/5MP1. Phosphorylated. Phosphorylation is enhanced upon serum stimulation.

The protein localises to the cytoplasm. In terms of biological role, component of the eukaryotic translation initiation factor 3 (eIF-3) complex, which is required for several steps in the initiation of protein synthesis. The eIF-3 complex associates with the 40S ribosome and facilitates the recruitment of eIF-1, eIF-1A, eIF-2:GTP:methionyl-tRNAi and eIF-5 to form the 43S pre-initiation complex (43S PIC). The eIF-3 complex stimulates mRNA recruitment to the 43S PIC and scanning of the mRNA for AUG recognition. The eIF-3 complex is also required for disassembly and recycling of post-termination ribosomal complexes and subsequently prevents premature joining of the 40S and 60S ribosomal subunits prior to initiation. The eIF-3 complex specifically targets and initiates translation of a subset of mRNAs involved in cell proliferation, including cell cycling, differentiation and apoptosis, and uses different modes of RNA stem-loop binding to exert either translational activation or repression. The polypeptide is Eukaryotic translation initiation factor 3 subunit C (Pongo abelii (Sumatran orangutan)).